A 265-amino-acid polypeptide reads, in one-letter code: 5'-nucleotidase SurE (265 aa).

4 residues coordinate a divalent metal cation: Asp-11, Asp-12, Ser-43, and Asn-101.

This sequence belongs to the SurE nucleotidase family. The cofactor is a divalent metal cation.

Its subcellular location is the cytoplasm. It carries out the reaction a ribonucleoside 5'-phosphate + H2O = a ribonucleoside + phosphate. Its function is as follows. Nucleotidase that shows phosphatase activity on nucleoside 5'-monophosphates. The sequence is that of 5'-nucleotidase SurE from Synechococcus sp. (strain CC9311).